The sequence spans 444 residues: Elongation factor 1-alpha (444 aa).

The 224-residue stretch at Lys-15–Val-238 folds into the tr-type G domain. The segment at Gly-24 to Ser-31 is G1. Gly-24–Ser-31 lines the GTP pocket. Ser-31 lines the Mg(2+) pocket. The segment at Gly-80–Glu-84 is G2. The tract at residues Asp-101–Gly-104 is G3. GTP-binding positions include Asp-101 to His-105 and Asn-163 to Asp-166. Residues Asn-163–Asp-166 are G4. Positions Ser-202–Ile-204 are G5.

This sequence belongs to the TRAFAC class translation factor GTPase superfamily. Classic translation factor GTPase family. EF-Tu/EF-1A subfamily.

The protein localises to the cytoplasm. It catalyses the reaction GTP + H2O = GDP + phosphate + H(+). Its function is as follows. GTP hydrolase that promotes the GTP-dependent binding of aminoacyl-tRNA to the A-site of ribosomes during protein biosynthesis. This chain is Elongation factor 1-alpha, found in Pyrobaculum aerophilum (strain ATCC 51768 / DSM 7523 / JCM 9630 / CIP 104966 / NBRC 100827 / IM2).